The following is a 576-amino-acid chain: S-layer protein (576 aa).

The N-terminal stretch at 1-23 is a signal peptide; that stretch reads KKIGAIAAGSAMVASALATGVFA. N-linked (GlcNAc...) asparagine glycans are attached at residues asparagine 102 and asparagine 132.

This sequence belongs to the Mj S-layer protein family. N-linked glycans consist of the 779 Da trisaccharide beta-ManNAc(Thr)-(1-4)-beta-GlcNAc3NAcA-(1-3)-beta-GlcNAc.

The protein resides in the secreted. The protein localises to the cell wall. It is found in the S-layer. S-layer protein. The S-layer is a paracrystalline mono-layered assembly of proteins which coat the surface of the cell. The polypeptide is S-layer protein (sla) (Methanococcus voltae).